Reading from the N-terminus, the 1257-residue chain is Phosphatidylinositol 3,4,5-trisphosphate 5-phosphatase 2 (1257 aa).

One can recognise an SH2 domain in the interval 21-117 (WYHRDLSRAA…GLVCALLLPV (97 aa)). The span at 119–132 (GEREPDPPDDRDAS) shows a compositional bias: basic and acidic residues. The tract at residues 119-181 (GEREPDPPDD…ESTPNGLSTV (63 aa)) is disordered. A Phosphoserine modification is found at Ser132. Residues 156–166 (PSSPLPTPETP) show a composition bias toward pro residues. At Thr165 the chain carries Phosphothreonine. Phosphoserine is present on residues Ser241 and Ser353. Tyr887 is subject to Phosphotyrosine. Ser891 carries the post-translational modification Phosphoserine. The interval 897-986 (TGAKSKVPSV…PPKNSFNNPA (90 aa)) is disordered. The span at 939–951 (PPPTGRPPAPPRA) shows a compositional bias: pro residues. Residues 945 to 950 (PPAPPR) carry the SH3-binding motif. Over residues 952–966 (VPREEPLNPRLKSEG) the composition is skewed to basic and acidic residues. An NPXY motif motif is present at residues 984–987 (NPAY). Tyr987 is modified (phosphotyrosine). Over residues 999–1008 (PLEPPSLARA) the composition is skewed to low complexity. Residues 999–1119 (PLEPPSLARA…FLGEVASGDD (121 aa)) form a disordered region. Composition is skewed to pro residues over residues 1049 to 1060 (LPPPDFPPPPLP) and 1088 to 1104 (GPPP…PPGT). The residue at position 1132 (Ser1132) is a Phosphoserine. The tract at residues 1134–1196 (VDYAPGPGRS…PQGGRASGLG (63 aa)) is disordered. Tyr1136 and Tyr1161 each carry phosphotyrosine. Residues 1195 to 1257 (LGEAGMGAWL…LLLDTLQLSK (63 aa)) enclose the SAM domain. Phosphoserine is present on Ser1256.

This sequence belongs to the inositol 1,4,5-trisphosphate 5-phosphatase family. As to quaternary structure, interacts with tyrosine phosphorylated form of SHC1. Interacts with EGFR. Upon stimulation by the EGF signaling pathway, it forms a complex with SHC1 and EGFR. Interacts with cytoskeletal protein SORBS3/vinexin, promoting its localization to the periphery of cells. Forms a complex with filamin (FLNA or FLNB), actin, GPIb (GP1BA or GP1BB) that regulates cortical and submembraneous actin. Interacts with c-Met/MET, when c-Met/MET is phosphorylated on 'Tyr-1356'. Interacts with p130Cas/BCAR1. Interacts with CENTD3/ARAP3 via its SAM domain. Interacts with c-Cbl/CBL and CAP/SORBS1. Interacts with activated EPHA2 receptor. Interacts with receptors FCGR2A. Interacts with FCGR2B. Interacts with tyrosine kinase ABL1. Interacts with tyrosine kinase TEC. Interacts with CSF1R. Interacts (via N-terminus) with SH3YL1 (via SH3 domain). Interacts (via SH2 domain) with tyrosine phosphorylated KLRC1 (via ITIM). Interacts with NEDD9/HEF1. Tyrosine phosphorylated by the members of the SRC family after exposure to a diverse array of extracellular stimuli such as insulin, growth factors such as EGF or PDGF, chemokines, integrin ligands and hypertonic and oxidative stress. May be phosphorylated upon IgG receptor FCGR2B-binding. Phosphorylated at Tyr-987 following cell attachment and spreading. Phosphorylated at Tyr-1161 following EGF signaling pathway stimulation. In terms of tissue distribution, widely expressed.

The protein resides in the cytoplasm. Its subcellular location is the cytosol. The protein localises to the cytoskeleton. It is found in the membrane. It localises to the cell projection. The protein resides in the filopodium. Its subcellular location is the lamellipodium. The protein localises to the basal cell membrane. It is found in the nucleus. It localises to the nucleus speckle. The protein resides in the spindle pole. The catalysed reaction is a 1,2-diacyl-sn-glycero-3-phospho-(1D-myo-inositol-3,4,5-trisphosphate) + H2O = a 1,2-diacyl-sn-glycero-3-phospho-(1D-myo-inositol-3,4-bisphosphate) + phosphate. It catalyses the reaction 1,2-dioctanoyl-sn-glycero-3-phospho-(1D-myo-inositol-3,4,5-trisphosphate) + H2O = 1,2-dioctanoyl-sn-glycero-3-phospho-(1D-myo-inositol-3,4-bisphosphate) + phosphate. The enzyme catalyses 1,2-dihexadecanoyl-sn-glycero-3-phospho-(1D-myo-inositol-3,4,5-trisphosphate) + H2O = 1,2-dihexadecanoyl-sn-glycero-3-phospho-(1D-myo-inositol-3,4-bisphosphate) + phosphate. With respect to regulation, activated upon translocation to the sites of synthesis of PtdIns(3,4,5)P3 in the membrane. Enzymatic activity is enhanced in the presence of phosphatidylserine. In terms of biological role, phosphatidylinositol (PtdIns) phosphatase that specifically hydrolyzes the 5-phosphate of phosphatidylinositol-3,4,5-trisphosphate (PtdIns(3,4,5)P3) to produce PtdIns(3,4)P2, thereby negatively regulating the PI3K (phosphoinositide 3-kinase) pathways. Required for correct mitotic spindle orientation and therefore progression of mitosis. Plays a central role in regulation of PI3K-dependent insulin signaling, although the precise molecular mechanisms and signaling pathways remain unclear. While overexpression reduces both insulin-stimulated MAP kinase and Akt activation, its absence does not affect insulin signaling or GLUT4 trafficking. Confers resistance to dietary obesity. May act by regulating AKT2, but not AKT1, phosphorylation at the plasma membrane. Part of a signaling pathway that regulates actin cytoskeleton remodeling. Required for the maintenance and dynamic remodeling of actin structures as well as in endocytosis, having a major impact on ligand-induced EGFR internalization and degradation. Participates in regulation of cortical and submembraneous actin by hydrolyzing PtdIns(3,4,5)P3 thereby regulating membrane ruffling. Regulates cell adhesion and cell spreading. Required for HGF-mediated lamellipodium formation, cell scattering and spreading. Acts as a negative regulator of EPHA2 receptor endocytosis by inhibiting via PI3K-dependent Rac1 activation. Acts as a regulator of neuritogenesis by regulating PtdIns(3,4,5)P3 level and is required to form an initial protrusive pattern, and later, maintain proper neurite outgrowth. Acts as a negative regulator of the FC-gamma-RIIA receptor (FCGR2A). Mediates signaling from the FC-gamma-RIIB receptor (FCGR2B), playing a central role in terminating signal transduction from activating immune/hematopoietic cell receptor systems. Upon stimulation by EGF, it is recruited by EGFR and dephosphorylates PtdIns(3,4,5)P3. Plays a negative role in regulating the PI3K-PKB pathway, possibly by inhibiting PKB activity. Down-regulates Fc-gamma-R-mediated phagocytosis in macrophages independently of INPP5D/SHIP1. In macrophages, down-regulates NF-kappa-B-dependent gene transcription by regulating macrophage colony-stimulating factor (M-CSF)-induced signaling. Plays a role in the localization of AURKA and NEDD9/HEF1 to the basolateral membrane at interphase in polarized cysts, thereby mediates cell cycle homeostasis, cell polarization and cilia assembly. Additionally promotion of cilia growth is also facilitated by hydrolysis of (PtdIns(3,4,5)P3) to PtdIns(3,4)P2. Promotes formation of apical membrane-initiation sites during the initial stages of lumen formation via Rho family-induced actin filament organization and CTNNB1 localization to cell-cell contacts. May also hydrolyze PtdIns(1,3,4,5)P4, and could thus affect the levels of the higher inositol polyphosphates like InsP6. Involved in endochondral ossification. The protein is Phosphatidylinositol 3,4,5-trisphosphate 5-phosphatase 2 of Mus musculus (Mouse).